Here is a 325-residue protein sequence, read N- to C-terminus: MSQPPEHPGNPADPQGGNQGAGSYPPPGYGAPPPPPGYGXPPGTYLPPGYNAPPPPPGYGPPPGPPPPGYPTHLQSSGFSVGDAISWSWNRFTQNAVTLVVPVLAYAVALAAVIGATAGLVVALSDRATTAYTNTSGVSSESVDITMTPAAGIVMFLGYIALFALVLYMHAGILTGCLDIADGKPVTIATFFRPRNLGLVLVTGLLIVALTFIGGLLCVIPGLIFGFVAQFAVAFAVDRSTSPIDSVKASIETVGSNIGGSVLSWLAQLTAVLVGELLCFVGMLIGIPVAALIHVYTYRKLSGGQVVEAVRPAPPVGWPPGPQLA.

The tract at residues 1-75 is disordered; the sequence is MSQPPEHPGN…PPPGYPTHLQ (75 aa). 2 stretches are compositionally biased toward pro residues: residues 24-39 and 50-70; these read YPPP…PGYG and YNAP…PPGY. Transmembrane regions (helical) follow at residues 96-116, 153-173, 205-225, and 273-293; these read AVTL…VIGA, IVMF…HAGI, LLIV…GLIF, and LVGE…AALI.

It localises to the cell membrane. This is an uncharacterized protein from Mycobacterium tuberculosis (strain CDC 1551 / Oshkosh).